The sequence spans 460 residues: UDP-N-acetylmuramoylalanine--D-glutamate ligase (460 aa).

115-121 contacts ATP; it reads GTDGKTT.

It belongs to the MurCDEF family.

It is found in the cytoplasm. It catalyses the reaction UDP-N-acetyl-alpha-D-muramoyl-L-alanine + D-glutamate + ATP = UDP-N-acetyl-alpha-D-muramoyl-L-alanyl-D-glutamate + ADP + phosphate + H(+). Its pathway is cell wall biogenesis; peptidoglycan biosynthesis. Functionally, cell wall formation. Catalyzes the addition of glutamate to the nucleotide precursor UDP-N-acetylmuramoyl-L-alanine (UMA). The protein is UDP-N-acetylmuramoylalanine--D-glutamate ligase of Chlorobium luteolum (strain DSM 273 / BCRC 81028 / 2530) (Pelodictyon luteolum).